A 284-amino-acid chain; its full sequence is Formamidopyrimidine-DNA glycosylase (284 aa).

The active-site Schiff-base intermediate with DNA is the proline 2. The active-site Proton donor is the glutamate 3. Catalysis depends on lysine 61, which acts as the Proton donor; for beta-elimination activity. The DNA site is built by histidine 95, arginine 114, and arginine 159. The FPG-type zinc-finger motif lies at 244-278 (WVYGRKGQPCRVCNTPIERIRLAGRSTHFCPTCQR). Arginine 268 serves as the catalytic Proton donor; for delta-elimination activity.

Belongs to the FPG family. As to quaternary structure, monomer. Zn(2+) serves as cofactor.

The enzyme catalyses Hydrolysis of DNA containing ring-opened 7-methylguanine residues, releasing 2,6-diamino-4-hydroxy-5-(N-methyl)formamidopyrimidine.. It carries out the reaction 2'-deoxyribonucleotide-(2'-deoxyribose 5'-phosphate)-2'-deoxyribonucleotide-DNA = a 3'-end 2'-deoxyribonucleotide-(2,3-dehydro-2,3-deoxyribose 5'-phosphate)-DNA + a 5'-end 5'-phospho-2'-deoxyribonucleoside-DNA + H(+). In terms of biological role, involved in base excision repair of DNA damaged by oxidation or by mutagenic agents. Acts as a DNA glycosylase that recognizes and removes damaged bases. Has a preference for oxidized purines, such as 7,8-dihydro-8-oxoguanine (8-oxoG). Has AP (apurinic/apyrimidinic) lyase activity and introduces nicks in the DNA strand. Cleaves the DNA backbone by beta-delta elimination to generate a single-strand break at the site of the removed base with both 3'- and 5'-phosphates. This chain is Formamidopyrimidine-DNA glycosylase, found in Gloeobacter violaceus (strain ATCC 29082 / PCC 7421).